The sequence spans 150 residues: SsrA-binding protein (150 aa).

The protein belongs to the SmpB family.

The protein resides in the cytoplasm. Required for rescue of stalled ribosomes mediated by trans-translation. Binds to transfer-messenger RNA (tmRNA), required for stable association of tmRNA with ribosomes. tmRNA and SmpB together mimic tRNA shape, replacing the anticodon stem-loop with SmpB. tmRNA is encoded by the ssrA gene; the 2 termini fold to resemble tRNA(Ala) and it encodes a 'tag peptide', a short internal open reading frame. During trans-translation Ala-aminoacylated tmRNA acts like a tRNA, entering the A-site of stalled ribosomes, displacing the stalled mRNA. The ribosome then switches to translate the ORF on the tmRNA; the nascent peptide is terminated with the 'tag peptide' encoded by the tmRNA and targeted for degradation. The ribosome is freed to recommence translation, which seems to be the essential function of trans-translation. The polypeptide is SsrA-binding protein (Thermotoga maritima (strain ATCC 43589 / DSM 3109 / JCM 10099 / NBRC 100826 / MSB8)).